The primary structure comprises 112 residues: UPF0102 protein CFF8240_0294 (112 aa).

Belongs to the UPF0102 family.

The protein is UPF0102 protein CFF8240_0294 of Campylobacter fetus subsp. fetus (strain 82-40).